Consider the following 470-residue polypeptide: GTPase Der (470 aa).

2 EngA-type G domains span residues 2–165 (KTIA…GLEA) and 201–372 (IRVG…ENFS). Residues 8–15 (GKPNVGKS), 55–59 (DTGGI), 117–120 (NKID), 207–214 (GKVNVGKS), 254–258 (DTAGI), and 318–321 (NKWD) each bind GTP. Residues 373–457 (RRIPTSILNK…PILIRARKRG (85 aa)) enclose the KH-like domain.

The protein belongs to the TRAFAC class TrmE-Era-EngA-EngB-Septin-like GTPase superfamily. EngA (Der) GTPase family. In terms of assembly, associates with the 50S ribosomal subunit.

In terms of biological role, GTPase that plays an essential role in the late steps of ribosome biogenesis. This chain is GTPase Der, found in Wolinella succinogenes (strain ATCC 29543 / DSM 1740 / CCUG 13145 / JCM 31913 / LMG 7466 / NCTC 11488 / FDC 602W) (Vibrio succinogenes).